An 83-amino-acid polypeptide reads, in one-letter code: Alpha-neurotoxin NTX-3 (83 aa).

The signal sequence occupies residues 1–21; the sequence is MKTLLLTLLVVTIVCLDLGYT. Cystine bridges form between cysteine 24/cysteine 45, cysteine 38/cysteine 62, cysteine 64/cysteine 75, and cysteine 76/cysteine 81.

Belongs to the three-finger toxin family. Short-chain subfamily. Type I alpha-neurotoxin sub-subfamily. In terms of tissue distribution, expressed by the venom gland.

It is found in the secreted. Binds to muscle nicotinic acetylcholine receptor (nAChR) and inhibit acetylcholine from binding to the receptor, thereby impairing neuromuscular transmission. This is Alpha-neurotoxin NTX-3 from Naja sputatrix (Malayan spitting cobra).